A 639-amino-acid polypeptide reads, in one-letter code: UvrABC system protein C (639 aa).

The region spanning 20 to 97 (ERSGVYRMFD…IKKFQPKFNI (78 aa)) is the GIY-YIG domain. A UVR domain is found at 207 to 242 (KELQENLSRKMEELSSQMRFEEAAEIRDRIKALSYV).

The protein belongs to the UvrC family. Interacts with UvrB in an incision complex.

It is found in the cytoplasm. In terms of biological role, the UvrABC repair system catalyzes the recognition and processing of DNA lesions. UvrC both incises the 5' and 3' sides of the lesion. The N-terminal half is responsible for the 3' incision and the C-terminal half is responsible for the 5' incision. In Rickettsia africae (strain ESF-5), this protein is UvrABC system protein C.